Here is a 468-residue protein sequence, read N- to C-terminus: MVDTESQICPLSPFGDDDLESPLSEEFLQEMGSIQEISPSIGDDSSGTFAFAEYRCLGSGPGSDGSIITDTLSPASSPSSVSYTPIAGSADDSSSATLNIECRICGDKASGYHYGVHACEGCKGFFRRTIRLKLAYDKCDRSCKIQKKNRNKCQYCRFQKCLSDGMSHNAIRFGRMPRSEKAKLKAEILTCEHDLEDSEVADLKSLAKRIYEAYLKNFNMNKIKARIILAGKASNNPPFVIHDMETLCMAEKTLVAKLVANGIQNKEAEVRIFHCCQCTSVETVTELTEFAKSIPGFSNLNLNDQVTLLKYGVYEAIFAMLSSVMNKDGMLVAYGNGFITREFLKSLRKPFCDIMEPKFDFAMKFNALELDDSDISLFVAAIICCGDRPGLLNVGHIERMQESIVHVLQLHLQNNHPDDVFLFPKLLQKMADLRQLVTEHAQLVQVIKKTESDAALHPLLQEIYRDMY.

Residues 1–20 are disordered; that stretch reads MVDTESQICPLSPFGDDDLE. The segment at residues 99–173 is a DNA-binding region (nuclear receptor); it reads NIECRICGDK…DGMSHNAIRF (75 aa). 2 NR C4-type zinc fingers span residues 102–122 and 139–161; these read CRIC…CEGC and CDRS…FQKC. Positions 239–466 constitute an NR LBD domain; the sequence is FVIHDMETLC…HPLLQEIYRD (228 aa). A required for heterodimerization with RXRA region spans residues 304–433; that stretch reads DQVTLLKYGV…PKLLQKMADL (130 aa).

The protein belongs to the nuclear hormone receptor family. NR1 subfamily. Heterodimer; with RXRA. This heterodimerization is required for DNA binding and transactivation activity. Interacts with NCOA3 coactivator. Interacts with CITED2; the interaction stimulates its transcriptional activity. Also interacts with PPARBP in vitro. Interacts with AKAP13, LPIN1, PRDM16 and coactivator NCOA6. Interacts with ASXL1 and ASXL2. Interacts with PER2. Interacts with SIRT1; the interaction seems to be modulated by NAD(+) levels. Interacts with CRY1 and CRY2. In hepatocytes, interacts with PAQR3 and HUWE1; the interactions promote PPARA poylubiquitination and HUWE1-mediated degradation. In terms of processing, ubiquitinated by E3 ubiquitin-protein ligase HUWE1; leading to proteasomal degradation. Phosphorylated.

The protein localises to the nucleus. Its function is as follows. Ligand-activated transcription factor. Key regulator of lipid metabolism. Activated by the endogenous ligand 1-palmitoyl-2-oleoyl-sn-glycerol-3-phosphocholine (16:0/18:1-GPC). Activated by oleylethanolamide, a naturally occurring lipid that regulates satiety. Receptor for peroxisome proliferators such as hypolipidemic drugs and fatty acids. Regulates the peroxisomal beta-oxidation pathway of fatty acids. Functions as a transcription activator for the ACOX1 and P450 genes. Transactivation activity requires heterodimerization with RXRA and is antagonized by NR2C2. May be required for the propagation of clock information to metabolic pathways regulated by PER2. The sequence is that of Peroxisome proliferator-activated receptor alpha (PPARA) from Phascolarctos cinereus (Koala).